Reading from the N-terminus, the 824-residue chain is Protein bicaudal D homolog 2 (824 aa).

S2 is subject to N-acetylserine. Residues 20–269 (EWLRAEVKRL…ELSHYMSIND (250 aa)) adopt a coiled-coil conformation. The tract at residues 25 to 398 (EVKRLSHELA…RLTENLSALR (374 aa)) is interacts with DYNLL1, DYNC1H1, DYNC1I2, DCTN1 and DCTN2. Residues S190, S224, and S318 each carry the phosphoserine modification. The tract at residues 311–330 (LPLDNKTSTPKKEGLAPPSP) is disordered. T319 is modified (phosphothreonine). The tract at residues 334–599 (SDLLSELNIS…LLAPEAGRAD (266 aa)) is interaction with KIF5A. A coiled-coil region spans residues 338–537 (SELNISEIQK…VTFSEELANL (200 aa)). Phosphoserine is present on residues S343 and S395. Disordered stretches follow at residues 398–425 (RRLQ…GDYY), 559–622 (EGQG…DPRR), and 804–824 (EQTR…TPSL). A compositionally biased stretch (basic and acidic residues) spans 402 to 422 (ASKERQTALDNEKDRDSHEDG). Phosphoserine is present on residues S568, S574, and S582. Residues 590-824 (LLAPEAGRAD…PKTKPATPSL (235 aa)) form an interaction with RANBP2 region. Residue T602 is modified to Phosphothreonine. Positions 604–618 (DSSPSPGSSLPSPLS) are enriched in low complexity. Positions 666-808 (DKDKEALMEE…LELDHEQTRR (143 aa)) form a coiled coil. The tract at residues 666 to 814 (DKDKEALMEE…QTRRGRAKAA (149 aa)) is interacts with RAB6A. Residue T821 is modified to Phosphothreonine. S823 bears the Phosphoserine mark.

It belongs to the BicD family. As to quaternary structure, part of a tripartite complex with dynein and dynactin, acts an adapter linking the dynein motor complex and dynactin. Interacts with CPNE4 (via VWFA domain). Interacts with RAB6A. Interacts with NEK9. Interacts with DNAI1. Interacts with DYNC1H1. Interacts with RANBP2. Binds preferentially to tyrosinated microtubules than to detyrosinated microtubules. Interacts with DYNLL1, DYNC1I2; DCTN1, DCTN2 and KIF5A. Interacts with KIF1C. Post-translationally, phosphorylated by NEK9 in vitro. Ubiquitous.

Its subcellular location is the golgi apparatus. It is found in the cytoplasm. The protein localises to the cytoskeleton. The protein resides in the nucleus envelope. It localises to the nucleus. Its subcellular location is the nuclear pore complex. Functionally, acts as an adapter protein linking the dynein motor complex to various cargos and converts dynein from a non-processive to a highly processive motor in the presence of dynactin. Facilitates and stabilizes the interaction between dynein and dynactin and activates dynein processivity (the ability to move along a microtubule for a long distance without falling off the track). Facilitates the binding of RAB6A to the Golgi by stabilizing its GTP-bound form. Regulates coat complex coatomer protein I (COPI)-independent Golgi-endoplasmic reticulum transport via its interaction with RAB6A and recruitment of the dynein-dynactin motor complex. Contributes to nuclear and centrosomal positioning prior to mitotic entry through regulation of both dynein and kinesin-1. During G2 phase of the cell cycle, associates with RANBP2 at the nuclear pores and recruits dynein and dynactin to the nuclear envelope to ensure proper positioning of the nucleus relative to centrosomes prior to the onset of mitosis. This Homo sapiens (Human) protein is Protein bicaudal D homolog 2.